A 67-amino-acid chain; its full sequence is DNA gyrase inhibitor YacG (67 aa).

Positions 9, 12, 28, and 32 each coordinate Zn(2+). The interval 46–67 (RIPSSGDLNDSDDWSEQPLDRQ) is disordered.

Belongs to the DNA gyrase inhibitor YacG family. In terms of assembly, interacts with GyrB. The cofactor is Zn(2+).

Its function is as follows. Inhibits all the catalytic activities of DNA gyrase by preventing its interaction with DNA. Acts by binding directly to the C-terminal domain of GyrB, which probably disrupts DNA binding by the gyrase. This is DNA gyrase inhibitor YacG from Erwinia tasmaniensis (strain DSM 17950 / CFBP 7177 / CIP 109463 / NCPPB 4357 / Et1/99).